The following is a 292-amino-acid chain: Elongation factor Ts (292 aa).

Residues 80 to 83 (TDFV) form an involved in Mg(2+) ion dislocation from EF-Tu region.

This sequence belongs to the EF-Ts family.

The protein resides in the cytoplasm. Its function is as follows. Associates with the EF-Tu.GDP complex and induces the exchange of GDP to GTP. It remains bound to the aminoacyl-tRNA.EF-Tu.GTP complex up to the GTP hydrolysis stage on the ribosome. In Cupriavidus necator (strain ATCC 17699 / DSM 428 / KCTC 22496 / NCIMB 10442 / H16 / Stanier 337) (Ralstonia eutropha), this protein is Elongation factor Ts.